Here is a 362-residue protein sequence, read N- to C-terminus: Aspartate-semialdehyde dehydrogenase (362 aa).

Residues T15, G16, A17, V18, S40, S43, L87, and D88 each coordinate NADP(+). C154 acts as the Acyl-thioester intermediate in catalysis. An NADP(+)-binding site is contributed by G186. H251 functions as the Proton acceptor in the catalytic mechanism. Residue N340 participates in NADP(+) binding.

It belongs to the aspartate-semialdehyde dehydrogenase family. Homotetramer; dimer of dimers.

Its subcellular location is the cytoplasm. It localises to the cytosol. It is found in the nucleus. It carries out the reaction L-aspartate 4-semialdehyde + phosphate + NADP(+) = 4-phospho-L-aspartate + NADPH + H(+). It participates in amino-acid biosynthesis; L-methionine biosynthesis via de novo pathway; L-homoserine from L-aspartate: step 2/3. The protein operates within amino-acid biosynthesis; L-threonine biosynthesis; L-threonine from L-aspartate: step 2/5. In terms of biological role, catalyzes the NADPH-dependent formation of L-aspartate 4-semialdehyde (L-ASA) by the reductive dephosphorylation of 4-phospho-L-aspartate. Mediates the second step in the biosynthesis of amino acids that derive from aspartate (the aspartate family of amino acids), including methioinine and threonine, the latter of which is a precursor to isoleucine. The polypeptide is Aspartate-semialdehyde dehydrogenase (Trichophyton rubrum (strain ATCC MYA-4607 / CBS 118892) (Athlete's foot fungus)).